The sequence spans 1456 residues: CLIP-associating protein 1-B (1456 aa).

3 HEAT repeats span residues Leu68 to Thr87, Gln88 to Asn124, and Leu163 to Glu200. Residues Thr237 to Ala296 are disordered. The segment covering Ala284–Ala296 has biased composition (low complexity). The HEAT 4 repeat unit spans residues Thr442 to Thr479. 2 disordered regions span residues Ser547–Gly728 and Gly776–Tyr796. Positions Ser550 to Leu569 are enriched in low complexity. A compositionally biased stretch (polar residues) spans Arg573 to Arg594. Low complexity-rich tracts occupy residues Ala603–Ala618, Gln642–Asp656, and Val665–Gly679. A compositionally biased stretch (polar residues) spans Gln711–Arg721. Low complexity predominate over residues Ser785 to Tyr796. The stretch at Gln930–Pro967 is one HEAT 5 repeat. 2 disordered regions span residues Leu1037 to Pro1080 and Val1121 to Gly1147. Residues Lys1038 to Asn1050 are compositionally biased toward low complexity. The span at Ser1062 to Ser1074 shows a compositional bias: polar residues. The segment covering Val1121 to Glu1130 has biased composition (basic and acidic residues). HEAT repeat units follow at residues Glu1260–Ala1297 and Gln1378–Glu1415.

It belongs to the CLASP family. As to quaternary structure, interacts (via C-terminus) with clip1/clip-170, and cenpe.

It localises to the cytoplasm. It is found in the cytoskeleton. Its subcellular location is the microtubule organizing center. The protein resides in the centrosome. The protein localises to the chromosome. It localises to the centromere. It is found in the kinetochore. Its subcellular location is the spindle. The protein resides in the golgi apparatus. The protein localises to the trans-Golgi network. Its function is as follows. Microtubule plus-end tracking protein that promotes the stabilization of dynamic microtubules during anaphase. Plays a crucial role in chromatin-induced microtubule formation. May also act at microtubule minus ends. May be involved in the nucleation of noncentrosomal microtubules originating from the trans-Golgi network (TGN). In Xenopus laevis (African clawed frog), this protein is CLIP-associating protein 1-B.